Reading from the N-terminus, the 170-residue chain is Lipoprotein signal peptidase (170 aa).

A run of 3 helical transmembrane segments spans residues 9–29 (IGSV…KYLV), 72–92 (LFFL…ILKE), and 93–113 (TNKI…GNII). Catalysis depends on residues Asp124 and Asp146. Residues 142-162 (FNFADSYVVIGITLFIIYDLF) form a helical membrane-spanning segment.

Belongs to the peptidase A8 family.

Its subcellular location is the cell inner membrane. The enzyme catalyses Release of signal peptides from bacterial membrane prolipoproteins. Hydrolyzes -Xaa-Yaa-Zaa-|-(S,diacylglyceryl)Cys-, in which Xaa is hydrophobic (preferably Leu), and Yaa (Ala or Ser) and Zaa (Gly or Ala) have small, neutral side chains.. The protein operates within protein modification; lipoprotein biosynthesis (signal peptide cleavage). This protein specifically catalyzes the removal of signal peptides from prolipoproteins. This chain is Lipoprotein signal peptidase, found in Borrelia hermsii (strain HS1 / DAH).